A 443-amino-acid polypeptide reads, in one-letter code: MSSKLYIKTFGCQMNEYDSAKMADILLSEKNMELTEVPEEADLILFNTCSVREKAQEKVFHDLGRVRHLKNSKPDLLIGVGGCVASQEGSEIVRRAPFVDLVFGPQTLHRLPELIDARRRTGQSQVDITFPEIEKFDRLPPARTTGATAFVSIMEGCSKYCSFCVVPYTRGEEVSRPLDDVLTEVAGLVIQGVKEVTLLGQNVNAYYDKTSGEGDIDFATLLDYIHEIPGLVRIRYTTSHPREFTARLIETYQRLPKLVGHVHLPIQSGSDRILAAMKRGYTIIEYKSIIRKLRTIRPNISISSDFIVGFPGETDTDFEETMKLIDDVKFDESFSFIYSPRPGTPASDLPDDTPYRIKLARLHQLQEKIQRNAQMISQSMVDTIQRVLVEGPSKKDPNEFCGRTDNNRVVNFAGHAGLVGSFVDIKITAVSSHTLRGEISDMQ.

Residues 3-120 (SKLYIKTFGC…LPELIDARRR (118 aa)) form the MTTase N-terminal domain. 6 residues coordinate [4Fe-4S] cluster: Cys12, Cys49, Cys83, Cys157, Cys161, and Cys164. In terms of domain architecture, Radical SAM core spans 143–377 (RTTGATAFVS…KIQRNAQMIS (235 aa)). The TRAM domain maps to 378–441 (QSMVDTIQRV…SHTLRGEISD (64 aa)).

Belongs to the methylthiotransferase family. MiaB subfamily. In terms of assembly, monomer. [4Fe-4S] cluster is required as a cofactor.

The protein localises to the cytoplasm. The catalysed reaction is N(6)-dimethylallyladenosine(37) in tRNA + (sulfur carrier)-SH + AH2 + 2 S-adenosyl-L-methionine = 2-methylsulfanyl-N(6)-dimethylallyladenosine(37) in tRNA + (sulfur carrier)-H + 5'-deoxyadenosine + L-methionine + A + S-adenosyl-L-homocysteine + 2 H(+). Its function is as follows. Catalyzes the methylthiolation of N6-(dimethylallyl)adenosine (i(6)A), leading to the formation of 2-methylthio-N6-(dimethylallyl)adenosine (ms(2)i(6)A) at position 37 in tRNAs that read codons beginning with uridine. This Nitrosomonas eutropha (strain DSM 101675 / C91 / Nm57) protein is tRNA-2-methylthio-N(6)-dimethylallyladenosine synthase.